Reading from the N-terminus, the 360-residue chain is Tryptophan--tRNA ligase, mitochondrial (360 aa).

ATP is bound by residues Gln38 and His44 to Asn47. Residues Pro39–Asn47 carry the 'HIGH' region motif. Position 168 (Asp168) interacts with L-tryptophan. ATP-binding positions include Gly180–Asp182 and Lys229–Ser233. Residues Ile220 to Met230 show a composition bias toward basic and acidic residues. The tract at residues Ile220–Ile241 is disordered. The short motif at Lys229–Ser233 is the 'KMSKS' region element.

It belongs to the class-I aminoacyl-tRNA synthetase family.

Its subcellular location is the mitochondrion matrix. The catalysed reaction is tRNA(Trp) + L-tryptophan + ATP = L-tryptophyl-tRNA(Trp) + AMP + diphosphate + H(+). Its function is as follows. Catalyzes the attachment of tryptophan to tRNA(Trp). The chain is Tryptophan--tRNA ligase, mitochondrial from Caenorhabditis elegans.